A 231-amino-acid polypeptide reads, in one-letter code: Ribonuclease 3 (231 aa).

The region spanning 8–135 (VGDLERRIGH…LMAALYQDGG (128 aa)) is the RNase III domain. Mg(2+) is bound at residue E48. Catalysis depends on residues D52 and E124. Position 124 (E124) interacts with Mg(2+). The 70-residue stretch at 161–230 (DPKTALQEWA…AKALLEREGA (70 aa)) folds into the DRBM domain. Residues 210-231 (GKSRQEAEKAAAKALLEREGAG) form a disordered region. The span at 212 to 231 (SRQEAEKAAAKALLEREGAG) shows a compositional bias: basic and acidic residues.

It belongs to the ribonuclease III family. Homodimer. The cofactor is Mg(2+).

The protein localises to the cytoplasm. The catalysed reaction is Endonucleolytic cleavage to 5'-phosphomonoester.. Digests double-stranded RNA. Involved in the processing of primary rRNA transcript to yield the immediate precursors to the large and small rRNAs (23S and 16S). Processes some mRNAs, and tRNAs when they are encoded in the rRNA operon. Processes pre-crRNA and tracrRNA of type II CRISPR loci if present in the organism. The chain is Ribonuclease 3 from Caulobacter vibrioides (strain ATCC 19089 / CIP 103742 / CB 15) (Caulobacter crescentus).